The chain runs to 279 residues: NAD-dependent protein deacylase (279 aa).

The 253-residue stretch at 20–272 folds into the Deacetylase sirtuin-type domain; sequence RERLRQRIFF…PEFVEKLLKG (253 aa). 48–67 is an NAD(+) binding site; it reads GAGISAESGIRTFRAADGLW. Residues Tyr-92 and Arg-95 each coordinate substrate. Residue 129–132 participates in NAD(+) binding; that stretch reads QNID. His-147 acts as the Proton acceptor in catalysis. Zn(2+) is bound by residues Cys-155 and Cys-174. Residues 214–216, 240–242, and Ala-258 contribute to the NAD(+) site; these read GTS and NLE.

This sequence belongs to the sirtuin family. Class III subfamily. Forms a 1:1 complex with acetyl-CoA synthetase (Acs). Zn(2+) is required as a cofactor.

The protein localises to the cytoplasm. The enzyme catalyses N(6)-acetyl-L-lysyl-[protein] + NAD(+) + H2O = 2''-O-acetyl-ADP-D-ribose + nicotinamide + L-lysyl-[protein]. The catalysed reaction is N(6)-succinyl-L-lysyl-[protein] + NAD(+) + H2O = 2''-O-succinyl-ADP-D-ribose + nicotinamide + L-lysyl-[protein]. It catalyses the reaction N(6)-(2-hydroxyisobutanoyl)-L-lysyl-[protein] + NAD(+) + H2O = 2''-O-(2-hydroxyisobutanoyl)-ADP-D-ribose + nicotinamide + L-lysyl-[protein]. Its activity is regulated as follows. Deacetylation is inhibited by nicotinamide. Its function is as follows. NAD-dependent lysine deacetylase that specifically removes acetyl groups on target proteins. Also acts as a protein-lysine deacylase by mediating protein desuccinylation and de-2-hydroxyisobutyrylation. Modulates the activities of several proteins which are inactive in their acylated form. Activates the enzyme acetyl-CoA synthetase (acs) by deacetylating 'Lys-609' in the inactive, acetylated form of the enzyme. May also modulate the activity of other propionyl-adenosine monophosphate (AMP)-forming enzymes. The protein is NAD-dependent protein deacylase of Escherichia coli (strain K12).